Here is a 201-residue protein sequence, read N- to C-terminus: Recombination protein RecR (201 aa).

The segment at Cys-57–Cys-72 adopts a C4-type zinc-finger fold. The Toprim domain maps to Gly-81–Pro-176.

The protein belongs to the RecR family.

Its function is as follows. May play a role in DNA repair. It seems to be involved in an RecBC-independent recombinational process of DNA repair. It may act with RecF and RecO. The polypeptide is Recombination protein RecR (Erwinia tasmaniensis (strain DSM 17950 / CFBP 7177 / CIP 109463 / NCPPB 4357 / Et1/99)).